The sequence spans 687 residues: Dictomallein (687 aa).

2 disordered regions span residues 1–45 and 73–112; these read MGNG…SRRL and TAGGAAPLTPAVASPAGPTGSTPGSTPGATTAPAPSSTSA. Residues 233 to 501 enclose the Peptidase M66 domain; the sequence is PVFGTDADVQ…QAWIASRVLA (269 aa). Histidine 393 contacts Zn(2+). The active site involves glutamate 394. Zn(2+) contacts are provided by histidine 397 and histidine 403.

This sequence belongs to the dictomallein family. Requires Zn(2+) as cofactor.

This Burkholderia pseudomallei (strain 1710b) protein is Dictomallein (dtmL).